The primary structure comprises 360 residues: Peptide chain release factor 1 (360 aa).

Glutamine 235 is subject to N5-methylglutamine. A disordered region spans residues 281–310; that stretch reads AERQRQDAAQAESRRLQVGSGDRSQRIRTY.

This sequence belongs to the prokaryotic/mitochondrial release factor family. Post-translationally, methylated by PrmC. Methylation increases the termination efficiency of RF1.

It is found in the cytoplasm. In terms of biological role, peptide chain release factor 1 directs the termination of translation in response to the peptide chain termination codons UAG and UAA. This chain is Peptide chain release factor 1, found in Stenotrophomonas maltophilia (strain R551-3).